We begin with the raw amino-acid sequence, 235 residues long: ATP phosphoribosyltransferase (235 aa).

Belongs to the ATP phosphoribosyltransferase family. Short subfamily. Heteromultimer composed of HisG and HisZ subunits.

Its subcellular location is the cytoplasm. It carries out the reaction 1-(5-phospho-beta-D-ribosyl)-ATP + diphosphate = 5-phospho-alpha-D-ribose 1-diphosphate + ATP. Its pathway is amino-acid biosynthesis; L-histidine biosynthesis; L-histidine from 5-phospho-alpha-D-ribose 1-diphosphate: step 1/9. Catalyzes the condensation of ATP and 5-phosphoribose 1-diphosphate to form N'-(5'-phosphoribosyl)-ATP (PR-ATP). Has a crucial role in the pathway because the rate of histidine biosynthesis seems to be controlled primarily by regulation of HisG enzymatic activity. The protein is ATP phosphoribosyltransferase of Synechococcus sp. (strain JA-2-3B'a(2-13)) (Cyanobacteria bacterium Yellowstone B-Prime).